Consider the following 62-residue polypeptide: Large ribosomal subunit protein bL28 (62 aa).

The disordered stretch occupies residues 1–23; the sequence is MGKQCYVTGRKASTGNRRSHALN.

The protein belongs to the bacterial ribosomal protein bL28 family.

This Staphylococcus carnosus (strain TM300) protein is Large ribosomal subunit protein bL28.